The chain runs to 482 residues: tRNA sulfurtransferase (482 aa).

Positions 61-165 constitute a THUMP domain; that stretch reads AQYLETLACI…NDELYIISAV (105 aa). Residues 183–184, Lys-265, Gly-287, and Gln-296 contribute to the ATP site; that span reads LL. Cys-344 and Cys-456 are disulfide-bonded. The region spanning 404-482 is the Rhodanese domain; the sequence is LAADEVILDI…GFDNVKVYRP (79 aa). Cys-456 acts as the Cysteine persulfide intermediate in catalysis.

The protein belongs to the ThiI family.

The protein localises to the cytoplasm. The enzyme catalyses [ThiI sulfur-carrier protein]-S-sulfanyl-L-cysteine + a uridine in tRNA + 2 reduced [2Fe-2S]-[ferredoxin] + ATP + H(+) = [ThiI sulfur-carrier protein]-L-cysteine + a 4-thiouridine in tRNA + 2 oxidized [2Fe-2S]-[ferredoxin] + AMP + diphosphate. It carries out the reaction [ThiS sulfur-carrier protein]-C-terminal Gly-Gly-AMP + S-sulfanyl-L-cysteinyl-[cysteine desulfurase] + AH2 = [ThiS sulfur-carrier protein]-C-terminal-Gly-aminoethanethioate + L-cysteinyl-[cysteine desulfurase] + A + AMP + 2 H(+). It participates in cofactor biosynthesis; thiamine diphosphate biosynthesis. Its function is as follows. Catalyzes the ATP-dependent transfer of a sulfur to tRNA to produce 4-thiouridine in position 8 of tRNAs, which functions as a near-UV photosensor. Also catalyzes the transfer of sulfur to the sulfur carrier protein ThiS, forming ThiS-thiocarboxylate. This is a step in the synthesis of thiazole, in the thiamine biosynthesis pathway. The sulfur is donated as persulfide by IscS. This Aeromonas salmonicida (strain A449) protein is tRNA sulfurtransferase.